Reading from the N-terminus, the 239-residue chain is Phosphoribosylaminoimidazole-succinocarboxamide synthase (239 aa).

It belongs to the SAICAR synthetase family.

It catalyses the reaction 5-amino-1-(5-phospho-D-ribosyl)imidazole-4-carboxylate + L-aspartate + ATP = (2S)-2-[5-amino-1-(5-phospho-beta-D-ribosyl)imidazole-4-carboxamido]succinate + ADP + phosphate + 2 H(+). It participates in purine metabolism; IMP biosynthesis via de novo pathway; 5-amino-1-(5-phospho-D-ribosyl)imidazole-4-carboxamide from 5-amino-1-(5-phospho-D-ribosyl)imidazole-4-carboxylate: step 1/2. The protein is Phosphoribosylaminoimidazole-succinocarboxamide synthase of Acinetobacter baylyi (strain ATCC 33305 / BD413 / ADP1).